The following is a 326-amino-acid chain: Aspartate--ammonia ligase (326 aa).

This sequence belongs to the class-II aminoacyl-tRNA synthetase family. AsnA subfamily.

The protein resides in the cytoplasm. The catalysed reaction is L-aspartate + NH4(+) + ATP = L-asparagine + AMP + diphosphate + H(+). It functions in the pathway amino-acid biosynthesis; L-asparagine biosynthesis; L-asparagine from L-aspartate (ammonia route): step 1/1. This is Aspartate--ammonia ligase from Malacoplasma penetrans (strain HF-2) (Mycoplasma penetrans).